Consider the following 551-residue polypeptide: MQGAWVLLLLGFRLQLSLSVIPVEEENPAFWTQKAADALNVAKKLQPIQTSAKNLIIFLGDGMGVATVTATRILKGQLEGNLGPETPLAMDHFPYMALSKTYSVDRQVPDSASTATAYLCGVKTNYKTIGVSAAARFDQCNTTFGNEVLSVMYRAKKAGKSVGVGDHTRVQHASPAGTYVHTVTSNWYGDADMPALPLQEGCKDIATQLISNMDINVILGGGRKYMFPAGTPDPEYPNDVNETGTRLDGKNLVQEWLSKHQGSQYVWNRQELIQKSLDPSVTYLMGLFEPVDTKFEIQRDPLMDPSLKDMTEAALHVLSRNPKGFYLFVEGGRIDRGHHLGTAYLALTEAVMFDSAIERASLQASEQDTLTIVTADHSHVFSFGGYTLRGTSIFGLAPLNALDGKPYTSILYGNGPGYVGTGERPNVTDAESHDPSYQQQAAVPVKSETTVGKDVAIFARGPQAHLLHGVQEQNYIAHVMAFAGCLEPYTDCGLAPPADENRPTTPVQNSTTTTTTTTTTTTTTTTTRVQNSASSLGPATAPLAWHYWPRR.

The N-terminal stretch at methionine 1–serine 19 is a signal peptide. Aspartate 61 contacts Mg(2+). Aspartate 61 and serine 111 together coordinate Zn(2+). Serine 111 acts as the Phosphoserine intermediate in catalysis. A disulfide bridge connects residues cysteine 140 and cysteine 202. Asparagine 141 carries an N-linked (GlcNAc...) asparagine glycan. Serine 174 is a Mg(2+) binding site. Glutamate 235 serves as a coordination point for Ca(2+). The N-linked (GlcNAc...) asparagine glycan is linked to asparagine 241. Positions 288, 289, and 304 each coordinate Ca(2+). Glutamate 330 contacts Mg(2+). Zn(2+)-binding residues include aspartate 335, histidine 339, aspartate 376, and histidine 377. Asparagine 426 carries N-linked (GlcNAc...) asparagine glycosylation. Cysteine 485 and cysteine 492 form a disulfide bridge. Residues proline 496–glycine 537 are disordered. A glycan (N-linked (GlcNAc...) asparagine) is linked at asparagine 509. Positions threonine 511–threonine 527 are enriched in low complexity. A compositionally biased stretch (polar residues) spans arginine 528–glycine 537. Asparagine 531 is lipidated: GPI-anchor amidated asparagine. A propeptide spans serine 532–arginine 551 (removed in mature form).

The protein belongs to the alkaline phosphatase family. Homodimer. It depends on Mg(2+) as a cofactor. Requires Zn(2+) as cofactor. Ca(2+) serves as cofactor.

It localises to the cell membrane. The enzyme catalyses a phosphate monoester + H2O = an alcohol + phosphate. In terms of biological role, alkaline phosphatase that can hydrolyze various phosphate compounds. The polypeptide is Intestinal-type alkaline phosphatase 2 (Rattus norvegicus (Rat)).